A 246-amino-acid chain; its full sequence is Osmotin-like protein TPM-1 (246 aa).

The signal sequence occupies residues 1–21; that stretch reads MAYLRSSFVFFLLAFVTYTYA. 8 cysteine pairs are disulfide-bonded: Cys-30–Cys-225, Cys-72–Cys-82, Cys-87–Cys-93, Cys-141–Cys-213, Cys-146–Cys-196, Cys-154–Cys-164, Cys-168–Cys-177, and Cys-178–Cys-183.

It belongs to the thaumatin family.

The protein resides in the vacuole. The catalysed reaction is Endohydrolysis of (1-&gt;3)- or (1-&gt;4)-linkages in beta-D-glucans when the glucose residue whose reducing group is involved in the linkage to be hydrolyzed is itself substituted at C-3.. Functionally, antifungal protein that inhibits the growth of several phytopathogenic fungi (e.g. Trichothecium roseum, Fusarium oxysporum, Phytophthora citrophthora and Colletotrichum coccodes). May bind to beta-glucans and have beta-1,3-D-glucanase activity. In Solanum lycopersicum (Tomato), this protein is Osmotin-like protein TPM-1.